Here is a 388-residue protein sequence, read N- to C-terminus: Succinate--CoA ligase [ADP-forming] subunit beta (388 aa).

Positions 9–236 constitute an ATP-grasp domain; sequence KKLFAEHGVP…VAAVDPLEQK (228 aa). ATP-binding positions include Lys-45, 52-54, Glu-91, Ser-94, and Glu-99; that span reads GRG. Mg(2+) is bound by residues Asn-191 and Asp-205. Residues Asn-256 and 318-320 each bind substrate; that span reads GIT.

Belongs to the succinate/malate CoA ligase beta subunit family. Heterotetramer of two alpha and two beta subunits. Mg(2+) is required as a cofactor.

The enzyme catalyses succinate + ATP + CoA = succinyl-CoA + ADP + phosphate. It catalyses the reaction GTP + succinate + CoA = succinyl-CoA + GDP + phosphate. The protein operates within carbohydrate metabolism; tricarboxylic acid cycle; succinate from succinyl-CoA (ligase route): step 1/1. Functionally, succinyl-CoA synthetase functions in the citric acid cycle (TCA), coupling the hydrolysis of succinyl-CoA to the synthesis of either ATP or GTP and thus represents the only step of substrate-level phosphorylation in the TCA. The beta subunit provides nucleotide specificity of the enzyme and binds the substrate succinate, while the binding sites for coenzyme A and phosphate are found in the alpha subunit. This Parafrankia sp. (strain EAN1pec) protein is Succinate--CoA ligase [ADP-forming] subunit beta.